The sequence spans 295 residues: MGLNFTKMHGLGNDYIVINEFDGEKIKEDEKAEFSKKICKRGFSIGADGVIFVQPATDEKYDIRFRIFNSDGSEAEMCGNGIRCFSKFVYERVMQKNPLNVETMGGLRVSEMNIENNIVKSIKVFMGAPTFELKDIPMVVEGKSENDVFLDEEIELKNALLNSVKLSVVNVGNPHAVIFMKDNNLKAPFIRTHLNILGKEIEHHSVFPEKINVHFVEIVNPQEIKIITWERGAGYTTACGTGTTSSVIIANKLGKTGNKVLAHLDGGDLEIEIKEDGVYMEGDAVIVYDGELYQY.

The substrate site is built by N13 and N69. C78 (proton donor) is an active-site residue. Residues 79–80 (GN), N173, N212, and 230–231 (ER) contribute to the substrate site. The Proton acceptor role is filled by C239. Residue 240 to 241 (GT) coordinates substrate.

The protein belongs to the diaminopimelate epimerase family. In terms of assembly, homodimer.

Its subcellular location is the cytoplasm. The enzyme catalyses (2S,6S)-2,6-diaminopimelate = meso-2,6-diaminopimelate. It participates in amino-acid biosynthesis; L-lysine biosynthesis via DAP pathway; DL-2,6-diaminopimelate from LL-2,6-diaminopimelate: step 1/1. Its function is as follows. Catalyzes the stereoinversion of LL-2,6-diaminopimelate (L,L-DAP) to meso-diaminopimelate (meso-DAP), a precursor of L-lysine. This is Diaminopimelate epimerase from Methanococcus aeolicus (strain ATCC BAA-1280 / DSM 17508 / OCM 812 / Nankai-3).